Reading from the N-terminus, the 152-residue chain is Transcriptional repressor NrdR (152 aa).

A zinc finger lies at 3–34 (CPYCSYNESKVVDSRSTEDSISIRRRRECLEC). The ATP-cone domain occupies 49–139 (ILVIKKNLNR…VYRQFKDINT (91 aa)).

This sequence belongs to the NrdR family. The cofactor is Zn(2+).

Functionally, negatively regulates transcription of bacterial ribonucleotide reductase nrd genes and operons by binding to NrdR-boxes. The sequence is that of Transcriptional repressor NrdR from Clostridium tetani (strain Massachusetts / E88).